A 615-amino-acid chain; its full sequence is Protein translocase subunit SecD (615 aa).

The next 6 membrane-spanning stretches (helical) occupy residues 10–30 (YIML…NLYG), 452–472 (QGLE…IFFY), 477–497 (LIAT…MSLL), 504–524 (MPGI…NVLI), 546–568 (YAGA…IILY), and 585–605 (GVAT…NLLY).

Belongs to the SecD/SecF family. SecD subfamily. In terms of assembly, forms a complex with SecF. Part of the essential Sec protein translocation apparatus which comprises SecA, SecYEG and auxiliary proteins SecDF-YajC and YidC.

The protein localises to the cell inner membrane. Its function is as follows. Part of the Sec protein translocase complex. Interacts with the SecYEG preprotein conducting channel. SecDF uses the proton motive force (PMF) to complete protein translocation after the ATP-dependent function of SecA. The protein is Protein translocase subunit SecD of Salmonella choleraesuis (strain SC-B67).